We begin with the raw amino-acid sequence, 264 residues long: Thymidylate synthase (264 aa).

Arg21 contributes to the dUMP binding site. Residue His51 participates in (6R)-5,10-methylene-5,6,7,8-tetrahydrofolate binding. Position 126 to 127 (126 to 127 (RR)) interacts with dUMP. Cys146 functions as the Nucleophile in the catalytic mechanism. Residues 166–169 (RSCD), Asn177, and 207–209 (HLY) each bind dUMP. Position 169 (Asp169) interacts with (6R)-5,10-methylene-5,6,7,8-tetrahydrofolate. A (6R)-5,10-methylene-5,6,7,8-tetrahydrofolate-binding site is contributed by Ala263.

It belongs to the thymidylate synthase family. Bacterial-type ThyA subfamily. As to quaternary structure, homodimer.

The protein localises to the cytoplasm. It carries out the reaction dUMP + (6R)-5,10-methylene-5,6,7,8-tetrahydrofolate = 7,8-dihydrofolate + dTMP. The protein operates within pyrimidine metabolism; dTTP biosynthesis. Functionally, catalyzes the reductive methylation of 2'-deoxyuridine-5'-monophosphate (dUMP) to 2'-deoxythymidine-5'-monophosphate (dTMP) while utilizing 5,10-methylenetetrahydrofolate (mTHF) as the methyl donor and reductant in the reaction, yielding dihydrofolate (DHF) as a by-product. This enzymatic reaction provides an intracellular de novo source of dTMP, an essential precursor for DNA biosynthesis. This chain is Thymidylate synthase, found in Yersinia pseudotuberculosis serotype O:1b (strain IP 31758).